Consider the following 473-residue polypeptide: Ribulose bisphosphate carboxylase large chain (473 aa).

Positions 1 to 136 are necessary and sufficient to target proteins to carboxysomes, interacts with shell proteins; it reads MAVKKYSAGV…RLEDVRFPLA (136 aa). 2 residues coordinate substrate: Asn116 and Thr166. Catalysis depends on Lys168, which acts as the Proton acceptor. Lys170 provides a ligand contact to substrate. Positions 194, 196, and 197 each coordinate Mg(2+). Lys194 is modified (N6-carboxylysine). His287 functions as the Proton acceptor in the catalytic mechanism. Substrate contacts are provided by Arg288, His320, and Ser372.

The protein belongs to the RuBisCO large chain family. Type I subfamily. Heterohexadecamer of 8 large chains and 8 small chains. Forms a CsoS2-CsoS1-RuBisCO complex. The N-terminus (residues 1-136) interacts with shell proteins CsoS1A, CsoS1B and CsoS1C. Holo-RuBisCO interacts with the N-terminal repeats of CsoS2; binding is sensitive to ionic strength. A fusion of a single N-terminal repeat to the C-terminus of the large subunit of RuBisCO (cbbL) shows the repeat can lie between a CbbL dimer, making minor contacts to CbbS; thus each RuBisCO holoenzyme could bind 8 repeats. It depends on Mg(2+) as a cofactor.

Its subcellular location is the carboxysome. It catalyses the reaction 2 (2R)-3-phosphoglycerate + 2 H(+) = D-ribulose 1,5-bisphosphate + CO2 + H2O. It carries out the reaction D-ribulose 1,5-bisphosphate + O2 = 2-phosphoglycolate + (2R)-3-phosphoglycerate + 2 H(+). Its function is as follows. RuBisCO catalyzes two reactions: the carboxylation of D-ribulose 1,5-bisphosphate, the primary event in carbon dioxide fixation, as well as the oxidative fragmentation of the pentose substrate. Both reactions occur simultaneously and in competition at the same active site. There are estimated to be 270 RuBisCO heterohexadecamers per carboxysome. In terms of biological role, alpha-carboxysomes are able to assemble in the absence of RuBisCO, unlike beta-carboxysomes. The RuBisCO large subunit is required for enzyme integration into carboxysomes; replacing it with the carboxysomally targeted gene (Tcr_0838, AC Q31HD9) of H.crungenus places RuBisCO in the carboxysome, while the non-carboxysomal large subunit of H.crungenus (Tcr_0427, AC Q31IK0) is not incorporated in the carboxysome. This chain is Ribulose bisphosphate carboxylase large chain, found in Halothiobacillus neapolitanus (strain ATCC 23641 / c2) (Thiobacillus neapolitanus).